Consider the following 427-residue polypeptide: MRISKASNIESTGVSNCKNFNSKNCSKYSLMEVQNKNEKKRSLTSFHAKNITLIFGIIYVALLGVYICASQYKQAADYSFRESRVLAEGKSTSKKNAKTALRKTKQTTLTSADPEGQIMKAWAADPEYRKHLNVLYQILNNTDPNDELETSADPEGQIMKAYAADPEYRKHLNVLYQILNNTDPNDEVESSADPEGQIMKAYAADPEYRKHVNVLYQILNNTDPNDELETSADPEGQIMKAYAADPEYRKHVNVLYQILNHTDSSEVETSADPEGQIMKAYAADPEYRKHVNVLYQILNHTDSSEVETSADPEGQIMKAYAADPEYRKHVNVLYQILNNTDPNDELETSADPEGQIMKAYAADPEYRKHVNVLYQILNNTDPNDELETSADPEGQIMKAYAADPEYRKHVNVLYQILNNTDPNDESS.

GBP repeat units follow at residues 109 to 149, 150 to 189, 190 to 229, 230 to 269, 270 to 307, 308 to 347, 348 to 387, and 388 to 427; these read LTSA…DELE, TSAD…DEVE, SSAD…DELE, TSAD…EVET, SADP…SEVE, TSAD…DELE, and TSAD…DESS.

This chain is Glycophorin-binding protein-related antigen (GBPH), found in Plasmodium falciparum (isolate FCBR / Columbia).